We begin with the raw amino-acid sequence, 776 residues long: Isoamylase (776 aa).

Positions 1 to 26 (MKCPKILAALLGCAVLAGVPAMPAHA) are cleaved as a signal peptide. The Ca(2+) site is built by aspartate 154, glutamate 255, threonine 256, asparagine 258, and aspartate 285. Catalysis depends on aspartate 401, which acts as the Nucleophile. The cysteines at positions 410 and 422 are disulfide-linked. Residue glutamate 461 is the Proton donor of the active site. Intrachain disulfides connect cysteine 546–cysteine 616 and cysteine 738–cysteine 766.

This sequence belongs to the glycosyl hydrolase 13 family. In terms of assembly, monomer. It depends on Ca(2+) as a cofactor.

The enzyme catalyses Hydrolysis of (1-&gt;6)-alpha-D-glucosidic branch linkages in glycogen, amylopectin and their beta-limit dextrins.. This Pseudomonas sp. (strain SMP1) protein is Isoamylase (iam).